Consider the following 207-residue polypeptide: Urease accessory protein UreG (207 aa).

16–23 (GPVGSGKT) contributes to the GTP binding site.

Belongs to the SIMIBI class G3E GTPase family. UreG subfamily. In terms of assembly, homodimer. UreD, UreF and UreG form a complex that acts as a GTP-hydrolysis-dependent molecular chaperone, activating the urease apoprotein by helping to assemble the nickel containing metallocenter of UreC. The UreE protein probably delivers the nickel.

The protein localises to the cytoplasm. Functionally, facilitates the functional incorporation of the urease nickel metallocenter. This process requires GTP hydrolysis, probably effectuated by UreG. The chain is Urease accessory protein UreG from Blochmanniella pennsylvanica (strain BPEN).